Reading from the N-terminus, the 50-residue chain is Ribosome-inactivating protein lyophyllin (50 aa).

It carries out the reaction Endohydrolysis of the N-glycosidic bond at one specific adenosine on the 28S rRNA.. N-glycosylase that inhibits protein synthesis by depurinating ribosomal rRNA, and thus acts as a ribosomal inactivating protein (RIP). Has adenine polynucleotide glycosidase activity on the poly(A) substrate A30-ssDNA. Inhibits cell-free translation in rabbit reticulocyte lysate system with an IC(50) of 1 nM. May function in the defense response to pathogens. Displays antifungal activity against C.comatus and P.piricola, but not against R.solani, M.arachidicola and C.gossypii. Inhibits mycelial growth in P.piricola with an IC(50) of 2.5 uM. Has cytotoxic activity against the human cancer cell lines Hela, HepG2, and JAR, with IC(50) of 358.8, 489.8, and 926.9 nM respectively. It also inhibits HIV-1 reverse transcriptase activity (IC(50)=7.9 nM) and disrupts mouse embryonic development. The protein is Ribosome-inactivating protein lyophyllin of Lyophyllum shimeji (Hon-shimeji).